A 268-amino-acid polypeptide reads, in one-letter code: F-actin-capping protein subunit beta (268 aa).

Belongs to the F-actin-capping protein beta subunit family. As to quaternary structure, component of the F-actin capping complex, composed of a heterodimer of an alpha and a beta subunit.

It localises to the cytoplasm. Its subcellular location is the cytoskeleton. The protein resides in the actin patch. It is found in the nucleus. Its function is as follows. F-actin-capping proteins bind in a Ca(2+)-independent manner to the fast growing ends of actin filaments (barbed end) thereby blocking the exchange of subunits at these ends. Unlike other capping proteins (such as gelsolin and severin), these proteins do not sever actin filaments. Competes with formin cdc12 for attachment to the actin filaments barbed ends. Slowly replaces cdc12 on the barbed ends in preparation for filament disassembly during contractile ring constriction. This is F-actin-capping protein subunit beta (acp2) from Schizosaccharomyces pombe (strain 972 / ATCC 24843) (Fission yeast).